The chain runs to 391 residues: DNA-directed RNA polymerase subunit Rpo1C (391 aa).

Belongs to the RNA polymerase beta' chain family. Part of the RNA polymerase complex.

It is found in the cytoplasm. Its subcellular location is the chromosome. It catalyses the reaction RNA(n) + a ribonucleoside 5'-triphosphate = RNA(n+1) + diphosphate. In terms of biological role, DNA-dependent RNA polymerase (RNAP) catalyzes the transcription of DNA into RNA using the four ribonucleoside triphosphates as substrates. Forms part of the jaw domain. The sequence is that of DNA-directed RNA polymerase subunit Rpo1C from Thermococcus kodakarensis (strain ATCC BAA-918 / JCM 12380 / KOD1) (Pyrococcus kodakaraensis (strain KOD1)).